A 162-amino-acid chain; its full sequence is MSIILIGFMGAGKSTVAKLLTENFTDLDQLIEEEIEMTIAEFFELFGEADFRKIENEVFELALQKNIIIATGGGIIENPKNLEALDREAGVVFLTADFETLWERISMDLQNVRPLAQDKKAAQLLFEKRKNDYAKVADLTIDVTDKSPEQIVEEIREKWGIN.

Residue 10 to 15 participates in ATP binding; that stretch reads GAGKST. Ser-14 is a binding site for Mg(2+). Substrate is bound by residues Asp-28, Arg-52, and Gly-73. Residue Arg-113 participates in ATP binding. Residue Arg-129 participates in substrate binding.

Belongs to the shikimate kinase family. As to quaternary structure, monomer. The cofactor is Mg(2+).

It is found in the cytoplasm. It carries out the reaction shikimate + ATP = 3-phosphoshikimate + ADP + H(+). The protein operates within metabolic intermediate biosynthesis; chorismate biosynthesis; chorismate from D-erythrose 4-phosphate and phosphoenolpyruvate: step 5/7. Functionally, catalyzes the specific phosphorylation of the 3-hydroxyl group of shikimic acid using ATP as a cosubstrate. This is Shikimate kinase from Lactococcus lactis subsp. lactis (strain IL1403) (Streptococcus lactis).